The sequence spans 280 residues: MTTLIRRGRRAEEGQERRADSEDSIKDKDEEESADSKDIRLTLMEEVLLLGLKDKEGYTSFWNDCISSGLRGGILIELFLRGRVVLEPATIRKKRLIDKKVLLKSDKLTGDVLLDETIKHMKATEPAETVQSWIELLTGETWNPFKLQYQLRNVRERIAKNLVEKGILTTEKQNFLLFDMTTHPVTNTTEKQRLVKKLQESLLERWVNDPHRMDKRTLSLLVLAHSSDVLENAFSSLSDEKYDMAMNRSKELLELDPDTEGMKPNACEMIWAVLSAFNKS.

A disordered region spans residues 1 to 32; sequence MTTLIRRGRRAEEGQERRADSEDSIKDKDEEE. The span at 10 to 32 shows a compositional bias: basic and acidic residues; it reads RAEEGQERRADSEDSIKDKDEEE. A 1,2-diacyl-sn-glycero-3-phospho-(1D-myo-inositol 4-phosphate) is bound by residues tryptophan 62, arginine 71, arginine 152, and arginine 155. The tract at residues 171–182 is beta-hairpin required for oligomerization; it reads EKQNFLLFDMTT.

This sequence belongs to the GOLPH3/VPS74 family. In terms of assembly, homooligomer.

Its subcellular location is the golgi apparatus. The protein localises to the golgi stack membrane. It is found in the trans-Golgi network membrane. Functionally, phosphatidylinositol-4-phosphate-binding protein that may play a role in the process of vesicle budding at the Golgi and anterograde transport to the plasma membrane. This Xenopus laevis (African clawed frog) protein is Golgi phosphoprotein 3-like A (golph3l-a).